Reading from the N-terminus, the 449-residue chain is MDDSLWSACLQQLEREIPEQQLNTWIRPLQAHLEGDALRLYAPNRFVLDWVRDNFSARIGELLAEIRPDEHLRVELEIGSPPTPDQREAATGATRAAPAQRSSEPRQRPVDSNLNPGFTFDSFVEGKSNQLARAASMQVADNPGGAYNPLFLYGGVGLGKTHLMHAVGNAIRTARPEARVLYLHSERFVAEMVKALQHNAINEFKRHYRNLDALLIDDIQFFAGKERSQEEFFHTFNALLESEQQVIMTCDRYPKEVNGLEERLKSRFGWGLTVAIEPPELETRVAILKSKAIRDGVDLPDEVAFFVAKRLRSNVRELEGALRRITANAQFTGRAIDVDFAKEALRDLLALQDKLVTIDNIQKTVAAYYKIRVGDLLSKRRSRSITRPRHMAMVLAKELTSHSLPEIGDAFGGRDHSTVLHACRNIKSLIEDDARLAEDYDNLLRTLST.

The interval 1 to 83 (MDDSLWSACL…VELEIGSPPT (83 aa)) is domain I, interacts with DnaA modulators. The tract at residues 77–114 (EIGSPPTPDQREAATGATRAAPAQRSSEPRQRPVDSNL) is disordered. Positions 83–112 (TPDQREAATGATRAAPAQRSSEPRQRPVDS) are domain II. Positions 89–99 (AATGATRAAPA) are enriched in low complexity. The tract at residues 113-329 (NLNPGFTFDS…GALRRITANA (217 aa)) is domain III, AAA+ region. G157, G159, K160, and T161 together coordinate ATP. Residues 330–449 (QFTGRAIDVD…YDNLLRTLST (120 aa)) are domain IV, binds dsDNA.

It belongs to the DnaA family. Oligomerizes as a right-handed, spiral filament on DNA at oriC.

Its subcellular location is the cytoplasm. Plays an essential role in the initiation and regulation of chromosomal replication. ATP-DnaA binds to the origin of replication (oriC) to initiate formation of the DNA replication initiation complex once per cell cycle. Binds the DnaA box (a 9 base pair repeat at the origin) and separates the double-stranded (ds)DNA. Forms a right-handed helical filament on oriC DNA; dsDNA binds to the exterior of the filament while single-stranded (ss)DNA is stabiized in the filament's interior. The ATP-DnaA-oriC complex binds and stabilizes one strand of the AT-rich DNA unwinding element (DUE), permitting loading of DNA polymerase. After initiation quickly degrades to an ADP-DnaA complex that is not apt for DNA replication. Binds acidic phospholipids. This is Chromosomal replication initiator protein DnaA from Halorhodospira halophila (strain DSM 244 / SL1) (Ectothiorhodospira halophila (strain DSM 244 / SL1)).